Consider the following 258-residue polypeptide: Acetylglutamate kinase (258 aa).

Residues 44–45 (GG), arginine 66, and asparagine 158 each bind substrate. ATP contacts are provided by residues 181–186 (DVSGIL) and 209–211 (IIT).

It belongs to the acetylglutamate kinase family. ArgB subfamily. In terms of assembly, homodimer.

It is found in the cytoplasm. The enzyme catalyses N-acetyl-L-glutamate + ATP = N-acetyl-L-glutamyl 5-phosphate + ADP. It functions in the pathway amino-acid biosynthesis; L-arginine biosynthesis; N(2)-acetyl-L-ornithine from L-glutamate: step 2/4. In terms of biological role, catalyzes the ATP-dependent phosphorylation of N-acetyl-L-glutamate. This is Acetylglutamate kinase from Shigella dysenteriae serotype 1 (strain Sd197).